We begin with the raw amino-acid sequence, 604 residues long: Prostaglandin G/H synthase 2 (604 aa).

The first 17 residues, 1–17, serve as a signal peptide directing secretion; it reads MLARAGLLCASLSPPHA. Residues 18-55 enclose the EGF-like domain; that stretch reads ANPCCSNPCQNQGVCMSIGFDQYMCDCSRTGFYGENCS. Intrachain disulfides connect C21-C32, C22-C145, C26-C42, and C44-C54. N-linked (GlcNAc...) asparagine glycosylation is present at N53. Residue R106 participates in substrate binding. N130 carries an N-linked (GlcNAc...) asparagine glycan. Catalysis depends on H193, which acts as the Proton acceptor. Residue Y341 coordinates substrate. The For cyclooxygenase activity role is filled by Y371. H374 serves as a coordination point for heme b. N396 is a glycosylation site (N-linked (GlcNAc...) asparagine). Position 526 is an S-nitrosocysteine (C526). An intrachain disulfide couples C555 to C561. A glycan (N-linked (GlcNAc...) asparagine) is linked at N580.

It belongs to the prostaglandin G/H synthase family. Homodimer. It depends on heme b as a cofactor. S-nitrosylation by NOS2 (iNOS) activates enzyme activity. S-nitrosylation may take place on different Cys residues in addition to Cys-526.

The protein resides in the microsome membrane. Its subcellular location is the endoplasmic reticulum membrane. It is found in the nucleus inner membrane. The protein localises to the nucleus outer membrane. It carries out the reaction (5Z,8Z,11Z,14Z)-eicosatetraenoate + AH2 + 2 O2 = prostaglandin H2 + A + H2O. The enzyme catalyses (5Z,8Z,11Z,14Z)-eicosatetraenoate + 2 O2 = prostaglandin G2. The catalysed reaction is prostaglandin G2 + AH2 = prostaglandin H2 + A + H2O. It catalyses the reaction (5Z,8Z,11Z,14Z,17Z)-eicosapentaenoate + 2 O2 = prostaglandin G3. It carries out the reaction prostaglandin G3 + AH2 = prostaglandin H3 + A + H2O. The enzyme catalyses (8Z,11Z,14Z)-eicosatrienoate + 2 O2 = prostaglandin G1. The catalysed reaction is prostaglandin G1 + AH2 = prostaglandin H1 + A + H2O. It catalyses the reaction 2-(5Z,8Z,11Z,14Z)-eicosatetraenoyl-sn-glycero-3-phosphoethanolamine + 2 O2 = 2-(prostaglandin G2)-sn-glycero-3-phosphoethanolamine. It carries out the reaction 2-(prostaglandin G2)-sn-glycero-3-phosphoethanolamine + AH2 = 2-(prostaglandin H2)-sn-glycero-3-phosphoethanolamine + A + H2O. The enzyme catalyses 2-(5Z,8Z,11Z,14Z)-eicosatetraenoyl-sn-glycero-3-phosphocholine + 2 O2 = 2-(prostaglandin G2)-sn-glycero-3-phosphocholine. The catalysed reaction is 2-(prostaglandin G2)-sn-glycero-3-phosphocholine + AH2 = 2-(prostaglandin H2)-sn-glycero-3-phosphocholine + A + H2O. It catalyses the reaction (15S)-hydroperoxy-(5Z,8Z,11Z,13E)-eicosatetraenoate + AH2 = (15S)-hydroxy-(5Z,8Z,11Z,13E)-eicosatetraenoate + A + H2O. It carries out the reaction 2-(5Z,8Z,11Z,14Z)-eicosatetraenoyl-sn-glycero-3-phosphocholine + AH2 + O2 = 2-[(15S)-hydroxy-(5Z,8Z,11Z,13E)-eicosatetraenoyl]-sn-glycero-3-phosphocholine + A + H2O. The enzyme catalyses 2-(5Z,8Z,11Z,14Z)-eicosatetraenoyl-sn-glycero-3-phosphocholine + AH2 + O2 = 2-[(15R)-hydroxy-(5Z,8Z,11Z,13E)-eicosatetraenoyl]-sn-glycero-3-phosphocholine + A + H2O. The catalysed reaction is 2-(5Z,8Z,11Z,14Z)-eicosatetraenoyl-sn-glycero-3-phosphocholine + AH2 + O2 = 2-[(11R)-hydroxy-(5Z,8Z,12E,14Z)-eicosatetraenoyl]-sn-glycero-3-phosphocholine + A + H2O. It catalyses the reaction (9Z,12Z)-octadecadienoate + AH2 + O2 = 9-hydroxy-(10E,12Z)-octadecadienoate + A + H2O. It carries out the reaction (9Z,12Z)-octadecadienoate + AH2 + O2 = 13-hydroxy-(9Z,11E)-octadecadienoate + A + H2O. The enzyme catalyses (5Z,8Z,11Z,14Z)-eicosatetraenoate + AH2 + O2 = (15R)-hydroxy-(5Z,8Z,11Z,13E)-eicosatetraenoate + A + H2O. The catalysed reaction is (5Z,8Z,11Z,14Z)-eicosatetraenoate + AH2 + O2 = (11R)-hydroxy-(5Z,8Z,12E,14Z)-eicosatetraenoate + A + H2O. It catalyses the reaction (5Z,8Z,11Z,14Z,17Z)-eicosapentaenoate + AH2 + O2 = (11R)-hydroxy-(5Z,8Z,12E,14Z,17Z)-eicosapentaenoate + A + H2O. It carries out the reaction (5Z,8Z,11Z,14Z,17Z)-eicosapentaenoate + AH2 + O2 = (18S)-hydroxy-(5Z,8Z,11Z,14Z,16E)-eicosapentaenoate + A + H2O. The enzyme catalyses (5Z,8Z,11Z,14Z,17Z)-eicosapentaenoate + AH2 + O2 = (18R)-hydroxy-(5Z,8Z,11Z,14Z,16E)-eicosapentaenoate + A + H2O. The catalysed reaction is (5Z,8Z,11Z,14Z,17Z)-eicosapentaenoate + AH2 + O2 = (15R)-hydroxy-(5Z,8Z,11Z,13E,17Z)-eicosapentaenoate + A + H2O. It catalyses the reaction (5Z,8Z,11Z,14Z,17Z)-eicosapentaenoate + AH2 + O2 = (15S)-hydroxy-(5Z,8Z,11Z,13E,17Z)-eicosapentaenoate + A + H2O. It carries out the reaction (7Z,10Z,13Z,16Z,19Z)-docosapentaenoate + AH2 + O2 = 13R-hydroxy-(7Z,10Z,14E,16Z,19Z)-docosapentaenoate + A + H2O. The enzyme catalyses (4Z,7Z,10Z,13Z,16Z,19Z)-docosahexaenoate + AH2 + O2 = 13-hydroxy-(4Z,7Z,10Z,14E,16Z,19Z)-docosahexaenoate + A + H2O. The catalysed reaction is (5S)-hydroxy-(6E,8Z,11Z,14Z)-eicosatetraenoate + AH2 + O2 = (5S,15R)-dihydroxy-(6E,8Z,11Z,13E)-eicosatetraenoate + A + H2O. It catalyses the reaction (4Z,7Z,10Z,13Z,16Z,19Z)-docosahexaenoate + AH2 + O2 = 17R-hydroxy-(4Z,7Z,10Z,13Z,15E,19Z)-docosahexaenoate + A + H2O. It carries out the reaction (5S)-hydroxy-(6E,8Z,11Z,14Z)-eicosatetraenoate + AH2 + O2 = (5S,15S)-dihydroxy-(6E,8Z,11Z,13E)-eicosatetraenoate + A + H2O. The enzyme catalyses (5S)-hydroxy-(6E,8Z,11Z,14Z)-eicosatetraenoate + AH2 + O2 = (5S,11R)-dihydroxy-(6E,8Z,12E,14Z)-eicosatetraenoate + A + H2O. The catalysed reaction is 2-(5Z,8Z,11Z,14Z-eicosatetraenoyl)-glycerol + 2 O2 = 2-glyceryl-prostaglandin G2. It catalyses the reaction 2-glyceryl-prostaglandin G2 + AH2 = 2-glyceryl-prostaglandin H2 + A + H2O. It carries out the reaction (5Z,8Z,11Z,14Z)-eicosatetraenoate + O2 = (15R)-hydroperoxy-(5Z,8Z,11Z,13E)-eicosatetraenoate. The enzyme catalyses (5Z,8Z,11Z,14Z)-eicosatetraenoate + O2 = 11R-hydroperoxy-(5Z,8Z,12E,14Z)-eicosatetraenoate. The catalysed reaction is (9Z,12Z)-octadecadienoate + AH2 + O2 = (9R)-hydroxy-(10E,12Z)-octadecadienoate + A + H2O. It catalyses the reaction (9Z,12Z)-octadecadienoate + AH2 + O2 = (9S)-hydroxy-(10E,12Z)-octadecadienoate + A + H2O. It carries out the reaction (9Z,12Z)-octadecadienoate + AH2 + O2 = (13S)-hydroxy-(9Z,11E)-octadecadienoate + A + H2O. The enzyme catalyses (9Z,12Z)-octadecadienoate + AH2 + O2 = (13R)-hydroxy-(9Z,11E)-octadecadienoate + A + H2O. The protein operates within lipid metabolism; prostaglandin biosynthesis. Dual cyclooxygenase and peroxidase in the biosynthesis pathway of prostanoids, a class of C20 oxylipins mainly derived from arachidonate ((5Z,8Z,11Z,14Z)-eicosatetraenoate, AA, C20:4(n-6)), with a particular role in the inflammatory response. The cyclooxygenase activity oxygenates AA to the hydroperoxy endoperoxide prostaglandin G2 (PGG2), and the peroxidase activity reduces PGG2 to the hydroxy endoperoxide prostaglandin H2 (PGH2), the precursor of all 2-series prostaglandins and thromboxanes. This complex transformation is initiated by abstraction of hydrogen at carbon 13 (with S-stereochemistry), followed by insertion of molecular O2 to form the endoperoxide bridge between carbon 9 and 11 that defines prostaglandins. The insertion of a second molecule of O2 (bis-oxygenase activity) yields a hydroperoxy group in PGG2 that is then reduced to PGH2 by two electrons. Similarly catalyzes successive cyclooxygenation and peroxidation of dihomo-gamma-linoleate (DGLA, C20:3(n-6)) and eicosapentaenoate (EPA, C20:5(n-3)) to corresponding PGH1 and PGH3, the precursors of 1- and 3-series prostaglandins. In an alternative pathway of prostanoid biosynthesis, converts 2-arachidonoyl lysophopholipids to prostanoid lysophopholipids, which are then hydrolyzed by intracellular phospholipases to release free prostanoids. Metabolizes 2-arachidonoyl glycerol yielding the glyceryl ester of PGH2, a process that can contribute to pain response. Generates lipid mediators from n-3 and n-6 polyunsaturated fatty acids (PUFAs) via a lipoxygenase-type mechanism. Oxygenates PUFAs to hydroperoxy compounds and then reduces them to corresponding alcohols. Plays a role in the generation of resolution phase interaction products (resolvins) during both sterile and infectious inflammation. Metabolizes docosahexaenoate (DHA, C22:6(n-3)) to 17R-HDHA, a precursor of the D-series resolvins (RvDs). As a component of the biosynthetic pathway of E-series resolvins (RvEs), converts eicosapentaenoate (EPA, C20:5(n-3)) primarily to 18S-HEPE that is further metabolized by ALOX5 and LTA4H to generate 18S-RvE1 and 18S-RvE2. In vascular endothelial cells, converts docosapentaenoate (DPA, C22:5(n-3)) to 13R-HDPA, a precursor for 13-series resolvins (RvTs) shown to activate macrophage phagocytosis during bacterial infection. In activated leukocytes, contributes to oxygenation of hydroxyeicosatetraenoates (HETE) to diHETES (5,15-diHETE and 5,11-diHETE). Can also use linoleate (LA, (9Z,12Z)-octadecadienoate, C18:2(n-6)) as substrate and produce hydroxyoctadecadienoates (HODEs) in a regio- and stereospecific manner, being (9R)-HODE ((9R)-hydroxy-(10E,12Z)-octadecadienoate) and (13S)-HODE ((13S)-hydroxy-(9Z,11E)-octadecadienoate) its major products. During neuroinflammation, plays a role in neuronal secretion of specialized preresolving mediators (SPMs) 15R-lipoxin A4 that regulates phagocytic microglia. The chain is Prostaglandin G/H synthase 2 (PTGS2) from Neovison vison (American mink).